The following is a 263-amino-acid chain: Shikimate dehydrogenase (NADP(+)) (263 aa).

Shikimate contacts are provided by residues 16 to 18 (SKS) and Thr-65. The active-site Proton acceptor is Lys-69. Shikimate contacts are provided by Asn-90 and Asp-105. Residues 125 to 129 (GSGGS) and Leu-208 each bind NADP(+). Tyr-210 provides a ligand contact to shikimate. Residue Gly-230 coordinates NADP(+).

This sequence belongs to the shikimate dehydrogenase family. In terms of assembly, homodimer.

It carries out the reaction shikimate + NADP(+) = 3-dehydroshikimate + NADPH + H(+). The protein operates within metabolic intermediate biosynthesis; chorismate biosynthesis; chorismate from D-erythrose 4-phosphate and phosphoenolpyruvate: step 4/7. Involved in the biosynthesis of the chorismate, which leads to the biosynthesis of aromatic amino acids. Catalyzes the reversible NADPH linked reduction of 3-dehydroshikimate (DHSA) to yield shikimate (SA). In Helicobacter pylori (strain G27), this protein is Shikimate dehydrogenase (NADP(+)).